We begin with the raw amino-acid sequence, 251 residues long: Large ribosomal subunit protein uL3 (251 aa).

Residue Gln-151 is modified to N5-methylglutamine. Positions Gly-221–Gly-251 are disordered. Low complexity predominate over residues Ala-225 to Gly-251.

The protein belongs to the universal ribosomal protein uL3 family. In terms of assembly, part of the 50S ribosomal subunit. Forms a cluster with proteins L14 and L19. Methylated by PrmB.

In terms of biological role, one of the primary rRNA binding proteins, it binds directly near the 3'-end of the 23S rRNA, where it nucleates assembly of the 50S subunit. The chain is Large ribosomal subunit protein uL3 from Novosphingobium aromaticivorans (strain ATCC 700278 / DSM 12444 / CCUG 56034 / CIP 105152 / NBRC 16084 / F199).